The following is a 557-amino-acid chain: ABC1 family protein MCP2 homolog (557 aa).

Residues 1-33 (MFSRFSWPRITRCFRSYPKKKSSCISFTHHARE) constitute a mitochondrion transit peptide. The Mitochondrial matrix segment spans residues 34-39 (HTNFKK). The helical transmembrane segment at 40 to 56 (PAVVGASITLMASVALV) threads the bilayer. Residues 57 to 557 (DFDPVKHAGV…NYFYYKHMYL (501 aa)) lie on the Mitochondrial intermembrane side of the membrane.

This sequence belongs to the protein kinase superfamily. ADCK protein kinase family.

The protein resides in the mitochondrion inner membrane. In terms of biological role, involved in mitochondrial lipid homeostasis. This is ABC1 family protein MCP2 homolog from Schizosaccharomyces pombe (strain 972 / ATCC 24843) (Fission yeast).